The primary structure comprises 211 residues: SAGA-associated factor 11 homolog 2 (211 aa).

The SGF11-type zinc-finger motif lies at 115–136; the sequence is CTCPNCDRLVAAARFAPHLEKC. Residues 149-211 are disordered; the sequence is RRLATKEGSS…GSKKNNGKTF (63 aa). Over residues 157–166 the composition is skewed to low complexity; the sequence is SSASTSSTST. Ser-187 bears the Phosphoserine mark. Residues 197–211 are compositionally biased toward low complexity; sequence SSRNNGSKKNNGKTF.

Belongs to the SGF11 family. Component of some SAGA transcription coactivator-HAT complexes, at least composed of Ada2b, not/nonstop, Pcaf/Gcn5, Sgf11 and Spt3. Within the SAGA complex, Sgf11, e(y)2, and not/nonstop form an additional subcomplex of SAGA called the DUB module (deubiquitination module). Interacts directly with not/nonstop. Interacts with the AMEX complex component xmas-2. Interacts with Cbp80; important for promoter recruitment of Sgf11 that is not associated with the DUB module.

It localises to the nucleus. It is found in the nucleoplasm. Its subcellular location is the cytoplasm. In terms of biological role, component of the transcription regulatory histone acetylation (HAT) complex SAGA, a multiprotein complex that activates transcription by remodeling chromatin and mediating histone acetylation and deubiquitination. Within the SAGA complex, participates in a subcomplex that specifically deubiquitinates histone H2B. The SAGA complex is recruited to specific gene promoters by activators, where it is required for transcription. Required for nuclear receptor-mediated transactivation. Binds independently on SAGA to promoters in an RNA-dependent manner. Binds to mRNA and is essential for total mRNA export from the nucleus. Required to counteract heterochromatin silencing. Controls the development of neuronal connectivity in visual system by being required for accurate axon targeting in the optic lobe. Required for expression of ecdysone-induced genes such as br/broad. This chain is SAGA-associated factor 11 homolog 2, found in Drosophila grimshawi (Hawaiian fruit fly).